The sequence spans 230 residues: ATP synthase subunit a (230 aa).

6 consecutive transmembrane segments (helical) span residues 26–46, 83–103, 112–132, 143–163, 182–202, and 203–223; these read ANAV…SLIA, FFPL…VGLI, NVNT…VVGI, FMGP…IGHL, LVLM…MMLM, and GVLV…IYIQ.

Belongs to the ATPase A chain family. As to quaternary structure, F-type ATPases have 2 components, CF(1) - the catalytic core - and CF(0) - the membrane proton channel. CF(1) has five subunits: alpha(3), beta(3), gamma(1), delta(1), epsilon(1). CF(0) has three main subunits: a(1), b(2) and c(9-12). The alpha and beta chains form an alternating ring which encloses part of the gamma chain. CF(1) is attached to CF(0) by a central stalk formed by the gamma and epsilon chains, while a peripheral stalk is formed by the delta and b chains.

The protein localises to the cell inner membrane. Its function is as follows. Key component of the proton channel; it plays a direct role in the translocation of protons across the membrane. The sequence is that of ATP synthase subunit a from Trichlorobacter lovleyi (strain ATCC BAA-1151 / DSM 17278 / SZ) (Geobacter lovleyi).